The chain runs to 288 residues: Acetylglutamate kinase (288 aa).

Residues 73–74 (GG), arginine 95, and asparagine 186 each bind substrate.

The protein belongs to the acetylglutamate kinase family. ArgB subfamily.

It localises to the cytoplasm. The catalysed reaction is N-acetyl-L-glutamate + ATP = N-acetyl-L-glutamyl 5-phosphate + ADP. It participates in amino-acid biosynthesis; L-arginine biosynthesis; N(2)-acetyl-L-ornithine from L-glutamate: step 2/4. Its function is as follows. Catalyzes the ATP-dependent phosphorylation of N-acetyl-L-glutamate. The polypeptide is Acetylglutamate kinase (Pelagibacter ubique (strain HTCC1062)).